The chain runs to 317 residues: Retinol dehydrogenase 7 (317 aa).

33-57 (FITGCDSGFGNLLARQLDRRGMRVL) serves as a coordination point for NADP(+). Serine 164 lines the substrate pocket. Residue tyrosine 176 is the Proton acceptor of the active site.

The protein belongs to the short-chain dehydrogenases/reductases (SDR) family.

The protein localises to the microsome. Its subcellular location is the endoplasmic reticulum. It carries out the reaction all-trans-retinol--[retinol-binding protein] + NAD(+) = all-trans-retinal--[retinol-binding protein] + NADH + H(+). It functions in the pathway cofactor metabolism; retinol metabolism. Functionally, acts on retinol bound on cellular retinol-binding protein (CRBP). This chain is Retinol dehydrogenase 7, found in Rattus norvegicus (Rat).